The primary structure comprises 630 residues: DNA mismatch repair protein MutL (630 aa).

The protein belongs to the DNA mismatch repair MutL/HexB family.

Its function is as follows. This protein is involved in the repair of mismatches in DNA. It is required for dam-dependent methyl-directed DNA mismatch repair. May act as a 'molecular matchmaker', a protein that promotes the formation of a stable complex between two or more DNA-binding proteins in an ATP-dependent manner without itself being part of a final effector complex. In Lactobacillus johnsonii (strain CNCM I-12250 / La1 / NCC 533), this protein is DNA mismatch repair protein MutL.